Consider the following 69-residue polypeptide: MKAKELRELTDAELVEKLASLKDELFKLRFQLSTGQLDNPSRIREVRRDIARVNTIIREREIARQKVEK.

Belongs to the universal ribosomal protein uL29 family.

In Carboxydothermus hydrogenoformans (strain ATCC BAA-161 / DSM 6008 / Z-2901), this protein is Large ribosomal subunit protein uL29.